A 389-amino-acid polypeptide reads, in one-letter code: Phospho-N-acetylmuramoyl-pentapeptide-transferase (389 aa).

10 helical membrane passes run 25–45, 73–93, 97–117, 135–155, 190–210, 222–242, 258–278, 286–306, 311–331, and 366–386; these read RAVM…PWVI, TMGG…WGDL, FIWI…VDDY, FWQS…VSEA, ISYP…IVGA, GLVI…AYVM, GAGE…AFLW, VFMG…VAVI, IVLF…MLQV, and QVVV…LSTL.

It belongs to the glycosyltransferase 4 family. MraY subfamily. Requires Mg(2+) as cofactor.

Its subcellular location is the cell inner membrane. It carries out the reaction UDP-N-acetyl-alpha-D-muramoyl-L-alanyl-gamma-D-glutamyl-meso-2,6-diaminopimeloyl-D-alanyl-D-alanine + di-trans,octa-cis-undecaprenyl phosphate = di-trans,octa-cis-undecaprenyl diphospho-N-acetyl-alpha-D-muramoyl-L-alanyl-D-glutamyl-meso-2,6-diaminopimeloyl-D-alanyl-D-alanine + UMP. It participates in cell wall biogenesis; peptidoglycan biosynthesis. Its function is as follows. Catalyzes the initial step of the lipid cycle reactions in the biosynthesis of the cell wall peptidoglycan: transfers peptidoglycan precursor phospho-MurNAc-pentapeptide from UDP-MurNAc-pentapeptide onto the lipid carrier undecaprenyl phosphate, yielding undecaprenyl-pyrophosphoryl-MurNAc-pentapeptide, known as lipid I. This chain is Phospho-N-acetylmuramoyl-pentapeptide-transferase, found in Burkholderia ambifaria (strain ATCC BAA-244 / DSM 16087 / CCUG 44356 / LMG 19182 / AMMD) (Burkholderia cepacia (strain AMMD)).